A 213-amino-acid chain; its full sequence is U1 small nuclear ribonucleoprotein C (213 aa).

The segment at 4 to 36 adopts a Matrin-type zinc-finger fold; that stretch reads YYCDYCDTYLTHDSPSVRKQHNAGYKHKANVRS. The segment covering 143–166 has biased composition (pro residues); that stretch reads APSMPMPPLNSLPRPPTMNVPPAV. The segment at 143–213 is disordered; sequence APSMPMPPLN…INAQGPEANH (71 aa). Residues 167–180 are compositionally biased toward low complexity; it reads PGSTSTPTSGGAPS.

This sequence belongs to the U1 small nuclear ribonucleoprotein C family. In terms of assembly, U1 snRNP is composed of the 7 core Sm proteins B/B', D1, D2, D3, E, F and G that assemble in a heptameric protein ring on the Sm site of the small nuclear RNA to form the core snRNP, and at least 3 U1 snRNP-specific proteins U1-70K, U1-A and U1-C. U1-C interacts with U1 snRNA and the 5' splice-site region of the pre-mRNA.

It localises to the nucleus. Functionally, component of the spliceosomal U1 snRNP, which is essential for recognition of the pre-mRNA 5' splice-site and the subsequent assembly of the spliceosome. U1-C is directly involved in initial 5' splice-site recognition for both constitutive and regulated alternative splicing. The interaction with the 5' splice-site seems to precede base-pairing between the pre-mRNA and the U1 snRNA. Stimulates commitment or early (E) complex formation by stabilizing the base pairing of the 5' end of the U1 snRNA and the 5' splice-site region. This chain is U1 small nuclear ribonucleoprotein C, found in Vitis vinifera (Grape).